Here is a 447-residue protein sequence, read N- to C-terminus: Rab GDP dissociation inhibitor alpha (447 aa).

This sequence belongs to the Rab GDI family. As to quaternary structure, interacts with RHOH. Interacts with the non-phosphorylated forms of RAB1A, RAB3A, RAB5A, RAB5B, RAB5C, RAB8A, RAB8B, RAB10, RAB12, RAB35, and RAB43.

Its subcellular location is the cytoplasm. The protein resides in the golgi apparatus. It localises to the trans-Golgi network. Regulates the GDP/GTP exchange reaction of most Rab proteins by inhibiting the dissociation of GDP from them, and the subsequent binding of GTP to them. Promotes the dissociation of GDP-bound Rab proteins from the membrane and inhibits their activation. Promotes the dissociation of RAB1A, RAB3A, RAB5A and RAB10 from membranes. This Pongo pygmaeus (Bornean orangutan) protein is Rab GDP dissociation inhibitor alpha (GDI1).